A 71-amino-acid polypeptide reads, in one-letter code: ATP synthase F(0) complex subunit e, mitochondrial (71 aa).

An N6-acetyllysine modification is found at Lys34.

Belongs to the ATPase e subunit family. Component of the ATP synthase complex composed at least of ATP5F1A/subunit alpha, ATP5F1B/subunit beta, ATP5MC1/subunit c (homooctomer), MT-ATP6/subunit a, MT-ATP8/subunit 8, ATP5ME/subunit e, ATP5MF/subunit f, ATP5MG/subunit g, ATP5MK/subunit k, ATP5MJ/subunit j, ATP5F1C/subunit gamma, ATP5F1D/subunit delta, ATP5F1E/subunit epsilon, ATP5PF/subunit F6, ATP5PB/subunit b, ATP5PD/subunit d, ATP5PO/subunit OSCP. ATP synthase complex consists of a soluble F(1) head domain (subunits alpha(3) and beta(3)) - the catalytic core - and a membrane F(0) domain - the membrane proton channel (subunits c, a, 8, e, f, g, k and j). These two domains are linked by a central stalk (subunits gamma, delta, and epsilon) rotating inside the F1 region and a stationary peripheral stalk (subunits F6, b, d, and OSCP).

It is found in the mitochondrion. It localises to the mitochondrion inner membrane. Subunit e, of the mitochondrial membrane ATP synthase complex (F(1)F(0) ATP synthase or Complex V) that produces ATP from ADP in the presence of a proton gradient across the membrane which is generated by electron transport complexes of the respiratory chain. ATP synthase complex consist of a soluble F(1) head domain - the catalytic core - and a membrane F(1) domain - the membrane proton channel. These two domains are linked by a central stalk rotating inside the F(1) region and a stationary peripheral stalk. During catalysis, ATP synthesis in the catalytic domain of F(1) is coupled via a rotary mechanism of the central stalk subunits to proton translocation. In vivo, can only synthesize ATP although its ATP hydrolase activity can be activated artificially in vitro. Part of the complex F(0) domain. The chain is ATP synthase F(0) complex subunit e, mitochondrial from Bos taurus (Bovine).